The following is a 1042-amino-acid chain: Glutamate dehydrogenase 2 (1042 aa).

Lysine 596 is an active-site residue. Arginine 763 carries the ADP-ribosylarginine; by Legionella Lart1 modification.

The protein belongs to the Glu/Leu/Phe/Val dehydrogenases family. As to quaternary structure, homodimer. (Microbial infection) ADP-ribosylated at Arg-763 by the Legionella pneumophila effector Lart1, which inhibits the glutamate dehydrogenase activity. Amoeba are natural hosts of Legionella, and ADP-ribosylation by Lart1 may promote Legionella parasitism.

The protein resides in the cytoplasm. It catalyses the reaction L-glutamate + NAD(+) + H2O = 2-oxoglutarate + NH4(+) + NADH + H(+). With respect to regulation, activity is stimulated by AMP. Its activity is regulated as follows. (Microbial infection) Inhibited by ADP-ribosylation. The protein is Glutamate dehydrogenase 2 (glud2) of Dictyostelium discoideum (Social amoeba).